A 589-amino-acid polypeptide reads, in one-letter code: Proline--tRNA ligase (589 aa).

Belongs to the class-II aminoacyl-tRNA synthetase family. ProS type 1 subfamily. As to quaternary structure, homodimer.

The protein localises to the cytoplasm. It catalyses the reaction tRNA(Pro) + L-proline + ATP = L-prolyl-tRNA(Pro) + AMP + diphosphate. Functionally, catalyzes the attachment of proline to tRNA(Pro) in a two-step reaction: proline is first activated by ATP to form Pro-AMP and then transferred to the acceptor end of tRNA(Pro). As ProRS can inadvertently accommodate and process non-cognate amino acids such as alanine and cysteine, to avoid such errors it has two additional distinct editing activities against alanine. One activity is designated as 'pretransfer' editing and involves the tRNA(Pro)-independent hydrolysis of activated Ala-AMP. The other activity is designated 'posttransfer' editing and involves deacylation of mischarged Ala-tRNA(Pro). The misacylated Cys-tRNA(Pro) is not edited by ProRS. The polypeptide is Proline--tRNA ligase (Gloeobacter violaceus (strain ATCC 29082 / PCC 7421)).